The sequence spans 314 residues: Acetaldehyde dehydrogenase 1 (314 aa).

11–14 lines the NAD(+) pocket; it reads SGNI. Cysteine 129 functions as the Acyl-thioester intermediate in the catalytic mechanism. NAD(+) is bound by residues 160-168 and asparagine 292; that span reads SAGPGTRAN.

The protein belongs to the acetaldehyde dehydrogenase family.

It catalyses the reaction acetaldehyde + NAD(+) + CoA = acetyl-CoA + NADH + H(+). The sequence is that of Acetaldehyde dehydrogenase 1 from Nocardioides sp. (strain ATCC BAA-499 / JS614).